A 392-amino-acid chain; its full sequence is Phospho-N-acetylmuramoyl-pentapeptide-transferase (392 aa).

The next 11 membrane-spanning stretches (helical) occupy residues 24-44 (YLTLRAVMAALTALLIGLIAG), 76-96 (TMGGVLILGSIAISTLLWFDL), 100-120 (FVWIVLAVTLGFGAIGWVDDW), 137-157 (YFWQSVIGLLAALYLVFSISE), 167-187 (FITWVQSGFLMDLPPKAGLLV), 193-213 (VSYPLGVLGFVILTYLVIVGS), 225-245 (GLAIMPVIMVGASLGIFAYVT), 262-282 (SGELLIFCAAMAGAGLAFLWF), 289-309 (VFMGDVGALALGAALGTIAVI), 314-334 (IVLAIMGGIFVVEALSVMLQV), and 369-389 (QVVVRFWIITMLLCLVGLTTL).

This sequence belongs to the glycosyltransferase 4 family. MraY subfamily. Mg(2+) is required as a cofactor.

It is found in the cell inner membrane. It carries out the reaction UDP-N-acetyl-alpha-D-muramoyl-L-alanyl-gamma-D-glutamyl-meso-2,6-diaminopimeloyl-D-alanyl-D-alanine + di-trans,octa-cis-undecaprenyl phosphate = di-trans,octa-cis-undecaprenyl diphospho-N-acetyl-alpha-D-muramoyl-L-alanyl-D-glutamyl-meso-2,6-diaminopimeloyl-D-alanyl-D-alanine + UMP. The protein operates within cell wall biogenesis; peptidoglycan biosynthesis. Functionally, catalyzes the initial step of the lipid cycle reactions in the biosynthesis of the cell wall peptidoglycan: transfers peptidoglycan precursor phospho-MurNAc-pentapeptide from UDP-MurNAc-pentapeptide onto the lipid carrier undecaprenyl phosphate, yielding undecaprenyl-pyrophosphoryl-MurNAc-pentapeptide, known as lipid I. This chain is Phospho-N-acetylmuramoyl-pentapeptide-transferase, found in Acidovorax ebreus (strain TPSY) (Diaphorobacter sp. (strain TPSY)).